Here is a 188-residue protein sequence, read N- to C-terminus: Elongation factor P (188 aa).

This sequence belongs to the elongation factor P family.

It is found in the cytoplasm. Its pathway is protein biosynthesis; polypeptide chain elongation. Functionally, involved in peptide bond synthesis. Stimulates efficient translation and peptide-bond synthesis on native or reconstituted 70S ribosomes in vitro. Probably functions indirectly by altering the affinity of the ribosome for aminoacyl-tRNA, thus increasing their reactivity as acceptors for peptidyl transferase. In Leptospira borgpetersenii serovar Hardjo-bovis (strain JB197), this protein is Elongation factor P.